Reading from the N-terminus, the 563-residue chain is Delta-1-pyrroline-5-carboxylate dehydrogenase, mitochondrial (563 aa).

The N-terminal 24 residues, 1-24, are a transit peptide targeting the mitochondrion; that stretch reads MLLPAPALRRALLSRPWTGAGLRW. Lys31 carries the post-translational modification N6-succinyllysine. A Phosphoserine modification is found at Ser44. N6-acetyllysine is present on Lys52. Lys93, Lys99, Lys114, Lys130, and Lys175 each carry N6-acetyllysine; alternate. N6-succinyllysine; alternate is present on residues Lys93, Lys99, Lys114, Lys130, and Lys175. NAD(+)-binding positions include Ser208, Lys233, and 286 to 290; that span reads GSVPT. Glu314 functions as the Proton acceptor in the catalytic mechanism. Residue Lys318 is modified to N6-acetyllysine. At Lys347 the chain carries N6-succinyllysine. Residue Cys348 is the Nucleophile of the active site. 2 positions are modified to N6-acetyllysine: Lys365 and Lys376. N6-succinyllysine is present on Lys395. Glu447 serves as a coordination point for NAD(+). At Lys462 the chain carries N6-acetyllysine. An N6-acetyllysine; alternate modification is found at Lys509. Lys509 bears the N6-succinyllysine; alternate mark. Ser513 serves as a coordination point for substrate. Lys531 and Lys552 each carry N6-acetyllysine.

The protein belongs to the aldehyde dehydrogenase family. In terms of assembly, homodimer. In terms of tissue distribution, highest expression is found in liver followed by skeletal muscle, kidney, heart, brain, placenta, lung and pancreas.

Its subcellular location is the mitochondrion matrix. It catalyses the reaction L-glutamate 5-semialdehyde + NAD(+) + H2O = L-glutamate + NADH + 2 H(+). Its pathway is amino-acid degradation; L-proline degradation into L-glutamate; L-glutamate from L-proline: step 2/2. Irreversible conversion of delta-1-pyrroline-5-carboxylate (P5C), derived either from proline or ornithine, to glutamate. This is a necessary step in the pathway interconnecting the urea and tricarboxylic acid cycles. The preferred substrate is glutamic gamma-semialdehyde, other substrates include succinic, glutaric and adipic semialdehydes. This Homo sapiens (Human) protein is Delta-1-pyrroline-5-carboxylate dehydrogenase, mitochondrial (ALDH4A1).